A 779-amino-acid polypeptide reads, in one-letter code: Phosphoribosylformylglycinamidine synthase subunit PurL (779 aa).

The active site involves His-52. Positions 55 and 94 each coordinate ATP. Position 96 (Glu-96) interacts with Mg(2+). Substrate-binding positions include 97–100 (SHNH) and Arg-119. His-98 (proton acceptor) is an active-site residue. Asp-120 provides a ligand contact to Mg(2+). Gln-243 is a binding site for substrate. Mg(2+) is bound at residue Asp-271. 315 to 317 (ESQ) provides a ligand contact to substrate. Asn-523 and Gly-560 together coordinate ATP. Asn-561 is a binding site for Mg(2+). Ser-563 contributes to the substrate binding site.

This sequence belongs to the FGAMS family. In terms of assembly, monomer. Part of the FGAM synthase complex composed of 1 PurL, 1 PurQ and 2 PurS subunits.

It is found in the cytoplasm. The catalysed reaction is N(2)-formyl-N(1)-(5-phospho-beta-D-ribosyl)glycinamide + L-glutamine + ATP + H2O = 2-formamido-N(1)-(5-O-phospho-beta-D-ribosyl)acetamidine + L-glutamate + ADP + phosphate + H(+). It functions in the pathway purine metabolism; IMP biosynthesis via de novo pathway; 5-amino-1-(5-phospho-D-ribosyl)imidazole from N(2)-formyl-N(1)-(5-phospho-D-ribosyl)glycinamide: step 1/2. Functionally, part of the phosphoribosylformylglycinamidine synthase complex involved in the purines biosynthetic pathway. Catalyzes the ATP-dependent conversion of formylglycinamide ribonucleotide (FGAR) and glutamine to yield formylglycinamidine ribonucleotide (FGAM) and glutamate. The FGAM synthase complex is composed of three subunits. PurQ produces an ammonia molecule by converting glutamine to glutamate. PurL transfers the ammonia molecule to FGAR to form FGAM in an ATP-dependent manner. PurS interacts with PurQ and PurL and is thought to assist in the transfer of the ammonia molecule from PurQ to PurL. The sequence is that of Phosphoribosylformylglycinamidine synthase subunit PurL from Prochlorococcus marinus (strain MIT 9215).